Consider the following 126-residue polypeptide: Pancreatic polypeptide prohormone (126 aa).

The N-terminal stretch at 1–26 (MTATRCCLWLLLLGTCMALLLPEAWG) is a signal peptide. Y62 bears the Tyrosine amide mark. Positions 77–126 (RQSHAAAPGGSHRHPPAGLPAAKGGTGVSGSPPKPWDCLPCRAHSLPSQS) are disordered.

The protein belongs to the NPY family. No icosapeptide-like peptide is cleaved from the C-terminal.

The protein resides in the secreted. In terms of biological role, hormone secreted by pancreatic cells that acts as a regulator of pancreatic and gastrointestinal functions probably by signaling through the G protein-coupled receptor NPY4R2. The chain is Pancreatic polypeptide prohormone (PPY) from Cavia porcellus (Guinea pig).